We begin with the raw amino-acid sequence, 194 residues long: ATP-dependent Clp protease proteolytic subunit (194 aa).

Serine 98 functions as the Nucleophile in the catalytic mechanism. The active site involves histidine 123.

Belongs to the peptidase S14 family. In terms of assembly, fourteen ClpP subunits assemble into 2 heptameric rings which stack back to back to give a disk-like structure with a central cavity, resembling the structure of eukaryotic proteasomes.

The protein resides in the cytoplasm. The enzyme catalyses Hydrolysis of proteins to small peptides in the presence of ATP and magnesium. alpha-casein is the usual test substrate. In the absence of ATP, only oligopeptides shorter than five residues are hydrolyzed (such as succinyl-Leu-Tyr-|-NHMec, and Leu-Tyr-Leu-|-Tyr-Trp, in which cleavage of the -Tyr-|-Leu- and -Tyr-|-Trp bonds also occurs).. In terms of biological role, cleaves peptides in various proteins in a process that requires ATP hydrolysis. Has a chymotrypsin-like activity. Plays a major role in the degradation of misfolded proteins. This Clostridium botulinum (strain Hall / ATCC 3502 / NCTC 13319 / Type A) protein is ATP-dependent Clp protease proteolytic subunit.